We begin with the raw amino-acid sequence, 471 residues long: NADH-quinone oxidoreductase subunit N (471 aa).

The next 14 membrane-spanning stretches (helical) occupy residues 6–26 (FILP…LGVY), 30–50 (SSNI…ILIF), 70–90 (LSSF…SIST), 98–118 (IFLI…MVMI), 123–143 (LMVF…LASF), 158–178 (FVLS…VYGF), 198–218 (LTFG…AVPF), 230–250 (PTAV…TVFI), 264–284 (WQPI…IAAI), 292–312 (LIAY…STGS), 320–340 (IVYM…LLML), 365–385 (LSLL…GFFA), 400–420 (FLAI…LKII), and 438–458 (IWLK…FIFP).

This sequence belongs to the complex I subunit 2 family. NDH-1 is composed of 14 different subunits. Subunits NuoA, H, J, K, L, M, N constitute the membrane sector of the complex.

It localises to the cell inner membrane. It catalyses the reaction a quinone + NADH + 5 H(+)(in) = a quinol + NAD(+) + 4 H(+)(out). Functionally, NDH-1 shuttles electrons from NADH, via FMN and iron-sulfur (Fe-S) centers, to quinones in the respiratory chain. The immediate electron acceptor for the enzyme in this species is believed to be ubiquinone. Couples the redox reaction to proton translocation (for every two electrons transferred, four hydrogen ions are translocated across the cytoplasmic membrane), and thus conserves the redox energy in a proton gradient. The polypeptide is NADH-quinone oxidoreductase subunit N (Pelagibacter ubique (strain HTCC1062)).